The primary structure comprises 383 residues: ATP phosphoribosyltransferase regulatory subunit (383 aa).

Belongs to the class-II aminoacyl-tRNA synthetase family. HisZ subfamily. As to quaternary structure, heteromultimer composed of HisG and HisZ subunits.

It is found in the cytoplasm. It participates in amino-acid biosynthesis; L-histidine biosynthesis; L-histidine from 5-phospho-alpha-D-ribose 1-diphosphate: step 1/9. Functionally, required for the first step of histidine biosynthesis. May allow the feedback regulation of ATP phosphoribosyltransferase activity by histidine. This is ATP phosphoribosyltransferase regulatory subunit from Neisseria meningitidis serogroup C / serotype 2a (strain ATCC 700532 / DSM 15464 / FAM18).